The sequence spans 409 residues: Putative competence-damage inducible protein (409 aa).

Belongs to the CinA family.

In Clostridium botulinum (strain Kyoto / Type A2), this protein is Putative competence-damage inducible protein.